A 380-amino-acid chain; its full sequence is 4-hydroxy-3-methylbut-2-en-1-yl diphosphate synthase (flavodoxin) (380 aa).

Residues C275, C278, C310, and E317 each contribute to the [4Fe-4S] cluster site.

Belongs to the IspG family. It depends on [4Fe-4S] cluster as a cofactor.

It catalyses the reaction (2E)-4-hydroxy-3-methylbut-2-enyl diphosphate + oxidized [flavodoxin] + H2O + 2 H(+) = 2-C-methyl-D-erythritol 2,4-cyclic diphosphate + reduced [flavodoxin]. Its pathway is isoprenoid biosynthesis; isopentenyl diphosphate biosynthesis via DXP pathway; isopentenyl diphosphate from 1-deoxy-D-xylulose 5-phosphate: step 5/6. In terms of biological role, converts 2C-methyl-D-erythritol 2,4-cyclodiphosphate (ME-2,4cPP) into 1-hydroxy-2-methyl-2-(E)-butenyl 4-diphosphate. The protein is 4-hydroxy-3-methylbut-2-en-1-yl diphosphate synthase (flavodoxin) of Hyphomonas neptunium (strain ATCC 15444).